A 639-amino-acid chain; its full sequence is NADP-dependent malic enzyme, chloroplastic (639 aa).

The N-terminal 49 residues, 1-49, are a transit peptide targeting the chloroplast; that stretch reads MLSARAAATAAAAAASPLWKRGEGGSSGSGSGCTSCREVRRRAAAVRVR. Residues 15-34 are disordered; sequence ASPLWKRGEGGSSGSGSGCT. Tyr-187 acts as the Proton donor in catalysis. Arg-240 provides a ligand contact to NAD(+). The active-site Proton acceptor is Lys-258. The a divalent metal cation site is built by Glu-330, Asp-331, and Asp-354. Position 354 (Asp-354) interacts with NAD(+). 383–399 serves as a coordination point for NADP(+); sequence LFLGAGEAGTGIAELIA. Position 495 (Asn-495) interacts with NAD(+).

It belongs to the malic enzymes family. Homotetramer. Mg(2+) is required as a cofactor. Mn(2+) serves as cofactor.

It is found in the plastid. The protein resides in the chloroplast. It carries out the reaction (S)-malate + NADP(+) = pyruvate + CO2 + NADPH. It catalyses the reaction oxaloacetate + H(+) = pyruvate + CO2. Its pathway is photosynthesis; C4 acid pathway. Functionally, the chloroplastic ME isoform decarboxylates malate shuttled from neighboring mesophyll cells. The CO(2) released is then refixed by ribulose-bisphosphate carboxylase. This pathway eliminates the photorespiratory loss of CO(2) that occurs in most plants. The polypeptide is NADP-dependent malic enzyme, chloroplastic (ME6) (Oryza sativa subsp. japonica (Rice)).